The sequence spans 248 residues: Neurovirulence factor ICP34.5 (248 aa).

The segment covering 1 to 14 has biased composition (basic residues); it reads MARRRRHRGPRRPR. The required for nucleolar localization stretch occupies residues 1 to 16; it reads MARRRRHRGPRRPRPP. Disordered stretches follow at residues 1 to 129 and 149 to 174; these read MARR…FRLP and RRAG…TPAT. The segment covering 24-35 has biased composition (polar residues); sequence TAQSQVTSTPNS. Positions 45–58 are enriched in pro residues; that stretch reads AAPPPPPAGGPPPS. Residues 73 to 83 are compositionally biased toward acidic residues; the sequence is ASDDDDDDDWP. Composition is skewed to pro residues over residues 84-93 and 119-128; these read DSPPPEPAPE and SHPPSRPFRL. The Nuclear export signal motif lies at 128–137; it reads LPPRLALRLR. 5 tandem repeats follow at residues 161-163, 164-166, 167-169, 170-172, and 173-175. The tract at residues 161–175 is 5 X 3 AA tandem repeats of A-T-P; the sequence is ATPATPATPATPATP. Residues 164 to 174 are compositionally biased toward low complexity; sequence ATPATPATPAT. The interval 175-188 is binding to PP1CA; the sequence is PARVRFSPHVRVRH. The tract at residues 175–188 is interaction with host PPP1CA; the sequence is PARVRFSPHVRVRH. The segment at 190 to 248 is important for interferon resistance; sequence VVWASAARLARRGSWARERADRARFRRRVAEAEAVIGPCLGPEARARALARGAGPANSV. The Bipartite nuclear localization signal signature appears at 200–218; the sequence is RRGSWARERADRARFRRRV. Positions 218-233 are interaction with host EIF2S1/EIF-2ALPHA; the sequence is VAEAEAVIGPCLGPEA.

Belongs to the PPP1R15 family. As to quaternary structure, interacts with host PPP1CA; this interaction forms a high-molecular-weight complex that dephosphorylates EIF2S1/eIF-2alpha. Interacts with host EIF2S1/eIF-2alpha; this interaction is crucial for the specific dephosphorylation of EIF2S1/eIF-2alpha by PPP1CA. Binds to proliferating cell nuclear antigen (PCNA), which may release host cells from growth arrest and facilitate viral replication. Interacts (via N-terminus) with host C1QBP; this interaction allows C1QBP to be recruited to the inner nuclear membrane by ICP34.5. Interacts with host PRKCA. Interacts with protein UL31. Interacts with host STING/TMEM173; this interaction inhibits the intracellular DNA sensing pathway. Interacts with host BECN1; this interaction modulates host autophagy.

The protein localises to the host cytoplasm. It is found in the host nucleus. The protein resides in the host nucleolus. Its subcellular location is the virion. Inhibits the establishment of the immune response and of the integrated stress response (ISR) in the infected cell. Plays essential roles in viral nuclear egress to mediate capsid transit across the nuclear membrane. Facilitates nuclear egress cooperatively with host C1QBP and protein kinase C/PKC to induce lamin A/C phosphorylation and subsequent reorganization. In turn, lamina disassembles and nuclear egress occurs. Recruits the serine/threonine protein phosphatase PPP1CA/PP1-alpha to dephosphorylate the translation initiation factor EIF2S1/eIF-2alpha, thereby couteracting the host shutoff of protein synthesis involving double-stranded RNA-dependent protein kinase EIF2AK2/PKR. In turn, controls host IRF3 activation and subsequently inhibits host interferon response. Controls the DNA sensing pathway by interacting with and inhibiting host STING/TMEM173. Also down-modulates the host MHC class II proteins cell surface expression. Acts as a neurovirulence factor that has a profound effect on the growth of the virus in central nervous system tissue, by interacting with host BECN1 and thereby antagonizing the host autophagy response. The sequence is that of Neurovirulence factor ICP34.5 (ICP34.5) from Homo sapiens (Human).